A 432-amino-acid chain; its full sequence is Adenylosuccinate synthetase (432 aa).

GTP-binding positions include 13–19 and 41–43; these read GDEGKGK and GHT. The active-site Proton acceptor is Asp14. The Mg(2+) site is built by Asp14 and Gly41. Residues 14–17, 39–42, Thr130, Arg144, Gln225, Thr240, and Arg304 each bind IMP; these read DEGK and NAGH. His42 acts as the Proton donor in catalysis. Residue 300-306 coordinates substrate; it reads AVTGRPR. Residues Arg306, 332-334, and 415-417 contribute to the GTP site; these read KLD and STG.

This sequence belongs to the adenylosuccinate synthetase family. Homodimer. Mg(2+) is required as a cofactor.

The protein resides in the cytoplasm. It catalyses the reaction IMP + L-aspartate + GTP = N(6)-(1,2-dicarboxyethyl)-AMP + GDP + phosphate + 2 H(+). It participates in purine metabolism; AMP biosynthesis via de novo pathway; AMP from IMP: step 1/2. Functionally, plays an important role in the de novo pathway of purine nucleotide biosynthesis. Catalyzes the first committed step in the biosynthesis of AMP from IMP. This is Adenylosuccinate synthetase from Haemophilus influenzae (strain 86-028NP).